Consider the following 367-residue polypeptide: MKIGVFIPIGNNGWLISSNAPQYMPSFELNKAIVQQAEHYQFDFALSMIKLRGFGGKTEFWDHNLESFTLMAGLAAVTSRIKIYATAATLTLPPAIVARMASTIDSISNGRFGLNVVTGWQKPEYEQMGLWPGDEYFSRRYDYLSEYVEVLQDFWGTGQSDFNGEFFQMDDCRVSPQPQTPIKLICAAQSDAGMAFSAKYADYNFCFGKGVNTPTAFAPTAARLQKAAEQAGREVSSYVLFMIIADETDELARAKWESYKAGADTEALAWLTEQSGKDTQSGADTNVRQMADPTSAVNINMGTLVGSYANVAKMMDDIATVPGTEGILLTFDDFLSGIENFGQHIQPLMNSRADIVDTLPPAAREVA.

FMN contacts are provided by residues 49 to 50 (IK), Asn115, Glu124, 140 to 141 (RY), and Ser190.

This sequence belongs to the NtaA/SnaA/DszA monooxygenase family. RutA subfamily.

The enzyme catalyses uracil + FMNH2 + NADH + O2 = (Z)-3-ureidoacrylate + FMN + NAD(+) + H2O + H(+). It carries out the reaction thymine + FMNH2 + NADH + O2 = (Z)-2-methylureidoacrylate + FMN + NAD(+) + H2O + H(+). Catalyzes the pyrimidine ring opening between N-3 and C-4 by an unusual flavin hydroperoxide-catalyzed mechanism, adding oxygen atoms in the process to yield ureidoacrylate peracid, that immediately reacts with FMN forming ureidoacrylate and FMN-N(5)-oxide. The FMN-N(5)-oxide reacts spontaneously with NADH to produce FMN. Requires the flavin reductase RutF to regenerate FMN in vivo. The polypeptide is Pyrimidine monooxygenase RutA (Yersinia enterocolitica serotype O:8 / biotype 1B (strain NCTC 13174 / 8081)).